A 578-amino-acid chain; its full sequence is mRNA-decapping enzyme 1B (578 aa).

Alanine 2 bears the N-acetylalanine mark. A phosphoserine mark is found at serine 144 and serine 145. Disordered stretches follow at residues 187-222 (AICD…PEPQ) and 246-265 (RTFA…TRPV). Basic residues predominate over residues 248–257 (FAHHHHHHHQ). Serine 274 and serine 335 each carry phosphoserine. Phosphothreonine is present on threonine 380.

This sequence belongs to the DCP1 family. As to quaternary structure, interacts with DCP1A.

The protein resides in the cytoplasm. Its subcellular location is the nucleus. The enzyme catalyses a 5'-end (N(7)-methyl 5'-triphosphoguanosine)-ribonucleoside in mRNA + H2O = N(7)-methyl-GDP + a 5'-end phospho-ribonucleoside in mRNA + 2 H(+). In terms of biological role, may play a role in the degradation of mRNAs, both in normal mRNA turnover and in nonsense-mediated mRNA decay. May remove the 7-methyl guanine cap structure from mRNA molecules, yielding a 5'-phosphorylated mRNA fragment and 7m-GDP. The polypeptide is mRNA-decapping enzyme 1B (Dcp1b) (Mus musculus (Mouse)).